Here is a 786-residue protein sequence, read N- to C-terminus: Rho GTPase-activating protein 10 (786 aa).

The 256-residue stretch at 7-262 folds into the BAR domain; sequence EFSDCYLDSP…IRQNPKDQKR (256 aa). Residues 265 to 372 enclose the PH domain; sequence QFTAEGYLYV…WLEALGGKEA (108 aa). The Rho-GAP domain maps to 389 to 574; it reads AQLDKMGFTI…ILIENHEKIF (186 aa). Disordered regions lie at residues 584–609 and 622–714; these read EPTCLSASPPNAPPRQSKRQGQRTKR and EGDS…PFPL. The span at 599-609 shows a compositional bias: basic residues; the sequence is QSKRQGQRTKR. A compositionally biased stretch (low complexity) spans 634–649; the sequence is PSSSQDSLSTPSPTTS. Residues 673–701 show a composition bias toward polar residues; it reads TATTPSQTRPSMVQWLNMQSPTTPSSNPA. Over residues 702–714 the composition is skewed to pro residues; that stretch reads GTPPSPRMSPFPL. Residues 728–786 form the SH3 domain; it reads VINRKARAVYPCEAEHSSELSFEIGAIFEDVQTSREPGWLEGTLNGKRGLIPQNYVKLL.

In terms of assembly, interacts with PKN3. Interacts with caspase-activated PAK2 proteolytic fragment PAK-2p34; the interaction does not affect ARHGAP10 GTPase activation activity towards RHOA and CDC42. Interacts via its SH3 domain with PTK2/FAK1. Interacts with PTK2B/PYK2; the interaction negatively regulates ARHGAP10 GTPase-activating activity. Interacts with MICAL1 and WDR44; complex formation might transit from GRAF2/ARHGAP10-MICAL1 to GRAF2/ARHGAP10-WDR44 complexes. In terms of processing, phosphorylated on tyrosine residues, probably involving PTK2B/PYK2. As to expression, high levels of expression in brain, testes, liver, heart and kidney.

Its subcellular location is the cytoplasm. The protein localises to the perinuclear region. The protein resides in the cell membrane. It localises to the endosome membrane. Functionally, GTPase-activating protein that catalyzes the conversion of active GTP-bound Rho GTPases to their inactive GDP-bound form, thus suppressing various Rho GTPase-mediated cellular processes. Also converts Cdc42 to an inactive GDP-bound state. Essential for PTKB2 regulation of cytoskeletal organization via Rho family GTPases. Inhibits PAK2 proteolytic fragment PAK-2p34 kinase activity and changes its localization from the nucleus to the perinuclear region. Stabilizes PAK-2p34 thereby increasing stimulation of cell death. Associates with MICAL1 on the endosomal membrane to promote Rab8-Rab10-dependent tubule extension. After dissociation with MICAL1, recruits WDR44 which connects the endoplasmic reticulum (ER) with the endosomal tubule, thereby participating in the export of a subset of neosynthesized proteins. This is Rho GTPase-activating protein 10 (Arhgap10) from Mus musculus (Mouse).